The chain runs to 378 residues: Pseudouridine kinase (378 aa).

Pseudouridine-binding positions include aspartate 12, threonine 26, 37 to 41 (GVARN), valine 38, asparagine 137, and lysine 166. Positions 181 and 237 each coordinate Mg(2+). ATP is bound by residues threonine 237, glycine 239, glycine 242, threonine 298, leucine 306, and glycine 310. Aspartate 311 is a pseudouridine binding site.

Belongs to the carbohydrate kinase PfkB family. In terms of assembly, forms homodimers.

The protein resides in the peroxisome. It catalyses the reaction pseudouridine + ATP = psi-UMP + ADP + H(+). Its function is as follows. Catalyzes the phosphorylation of pseudouridine to pseudouridine 5'-phosphate (PsiMP). Catalyzes the first step in a pseudouridine degradation pathway. Acts together with the pseudouridine 5'-phosphate glycosidase PUMY in the peroxisome to prevent toxic pseudouridine monophosphate accumulation. The polypeptide is Pseudouridine kinase (Arabidopsis thaliana (Mouse-ear cress)).